The following is a 112-amino-acid chain: Tyrosine-protein phosphatase 8 (112 aa).

Positions Glu-1–Val-112 constitute a Tyrosine-protein phosphatase domain.

It belongs to the protein-tyrosine phosphatase family.

It catalyses the reaction O-phospho-L-tyrosyl-[protein] + H2O = L-tyrosyl-[protein] + phosphate. The chain is Tyrosine-protein phosphatase 8 (STY-8) from Styela plicata (Wrinkled sea squirt).